The following is a 303-amino-acid chain: uncharacterized protein (303 aa).

Residues 183–281 (KDILFYLNNN…GCSPSDYRRQ (99 aa)) enclose the HTH araC/xylS-type domain. 2 DNA-binding regions (H-T-H motif) span residues 200–221 (EQLSKKFRASVSYICHEFTKEY) and 248–271 (QAEISWRVGYENVDHFAKLFLRHV).

This is an uncharacterized protein from Escherichia coli (strain K12).